Reading from the N-terminus, the 23-residue chain is Dahlein-4.2 (23 aa).

Expressed by the skin dorsal glands.

Its subcellular location is the secreted. Its function is as follows. Has no antimicrobial activity. This chain is Dahlein-4.2, found in Ranoidea dahlii (Dahl's aquatic frog).